The chain runs to 92 residues: Protein 10 (92 aa).

The EF-hand domain maps to 18 to 29 (FMQKYDKNSDQH).

Belongs to the calbindin family. Brain.

The chain is Protein 10 from Cavia porcellus (Guinea pig).